The primary structure comprises 323 residues: Olfactory receptor 2T35 (323 aa).

Residues 1–26 (MGMEGLLQNSTNFVLTGLITHPAFPG) lie on the Extracellular side of the membrane. An N-linked (GlcNAc...) asparagine glycan is attached at Asn-9. The helical transmembrane segment at 27–50 (LLFAVVFSIFVVAITANLVMILLI) threads the bilayer. At 51–58 (HMDSRLHT) the chain is on the cytoplasmic side. Residues 59–80 (PMYFLLSQLSIMDTIYICITVP) form a helical membrane-spanning segment. Residues 81–101 (KMLQDLLSKDKTISFLGCAVQ) lie on the Extracellular side of the membrane. Cys-98 and Cys-189 are oxidised to a cystine. The chain crosses the membrane as a helical span at residues 102–120 (IFYLTLIGGEFFLLGLMAY). The Cytoplasmic portion of the chain corresponds to 121-139 (DRYVAVCNPLRYPLLMNRR). Residues 140 to 158 (VCLFMVVGSWVGGSLDGFM) traverse the membrane as a helical segment. At 159 to 195 (LTPVTMSFPFCRSREINHFFCEIPAVLKLSCTDTSLY) the chain is on the extracellular side. A helical transmembrane segment spans residues 196–219 (ETLMYACCVLMLLIPLSVISVSYT). Residues 220–236 (HILLTVHRMNSAEGRRK) are Cytoplasmic-facing. The chain crosses the membrane as a helical span at residues 237–259 (AFATCSSHIMVVSVFYGAAFYTN). The Extracellular portion of the chain corresponds to 260–272 (VLPHSYHTPEKDK). Residues 273 to 292 (VVSAFYTILTPMLNPLIYSL) traverse the membrane as a helical segment. Topologically, residues 293-323 (RNKDVAAALRKVLGRCGSSQSIRVATVIRKG) are cytoplasmic.

Belongs to the G-protein coupled receptor 1 family.

It localises to the cell membrane. Functionally, odorant receptor. This Homo sapiens (Human) protein is Olfactory receptor 2T35 (OR2T35).